The sequence spans 221 residues: Deoxyribose-phosphate aldolase 1 (221 aa).

The active-site Proton donor/acceptor is the Asp-89. Residue Lys-152 is the Schiff-base intermediate with acetaldehyde of the active site. Residue Lys-181 is the Proton donor/acceptor of the active site.

The protein belongs to the DeoC/FbaB aldolase family. DeoC type 1 subfamily.

Its subcellular location is the cytoplasm. It carries out the reaction 2-deoxy-D-ribose 5-phosphate = D-glyceraldehyde 3-phosphate + acetaldehyde. It participates in carbohydrate degradation; 2-deoxy-D-ribose 1-phosphate degradation; D-glyceraldehyde 3-phosphate and acetaldehyde from 2-deoxy-alpha-D-ribose 1-phosphate: step 2/2. In terms of biological role, catalyzes a reversible aldol reaction between acetaldehyde and D-glyceraldehyde 3-phosphate to generate 2-deoxy-D-ribose 5-phosphate. This is Deoxyribose-phosphate aldolase 1 from Oceanobacillus iheyensis (strain DSM 14371 / CIP 107618 / JCM 11309 / KCTC 3954 / HTE831).